Here is a 323-residue protein sequence, read N- to C-terminus: MSSVGTAEPDGDQRDRQVSKLIFFLFVFGAVLLCVGVLISIFGYQACQYKPLSHCSMVLKIAGPSCAVMGLGTVILARSRARLQLRERQRQGHQDPDQSFFCGESRQFAQCLIFGFLFLTSGMLISILGIWVPGCGSDWAQEPLNETNSGEGEPQICSFLSLQIMGPLIVLVGLCFFVVAHVKKKSNLSSSRDTSEIEGGHTHSTEPVHITVGDSVIIFPPPPPPYFAESSAAAPSPGANSLHRIENPPSYSSLFNLSRTPTPENQGAASERDREVIYTISGPGSSSESSHTGHLPLDLPPRYEEKETAPATPLGAPSESSPP.

Helical transmembrane passes span 22–42 (IFFLFVFGAVLLCVGVLISIF), 57–77 (MVLKIAGPSCAVMGLGTVILA), 112–132 (LIFGFLFLTSGMLISILGIWV), and 159–179 (FLSLQIMGPLIVLVGLCFFVV). Residues 251 to 268 (YSSLFNLSRTPTPENQGA) show a composition bias toward polar residues. Positions 251–323 (YSSLFNLSRT…LGAPSESSPP (73 aa)) are disordered. The segment covering 281 to 290 (SGPGSSSESS) has biased composition (low complexity).

It is found in the membrane. In Rattus norvegicus (Rat), this protein is Transmembrane protein 171 (Tmem171).